Here is a 151-residue protein sequence, read N- to C-terminus: Transcriptional repressor NrdR (151 aa).

The segment at 3 to 34 (CPFCGYSESKVVDSRSTEDNMAIRRRRECLEC) is a zinc-finger region. Residues 49-139 (ILVIKKDSSR…VYRQFKDINT (91 aa)) enclose the ATP-cone domain.

The protein belongs to the NrdR family. Zn(2+) serves as cofactor.

In terms of biological role, negatively regulates transcription of bacterial ribonucleotide reductase nrd genes and operons by binding to NrdR-boxes. In Clostridium acetobutylicum (strain ATCC 824 / DSM 792 / JCM 1419 / IAM 19013 / LMG 5710 / NBRC 13948 / NRRL B-527 / VKM B-1787 / 2291 / W), this protein is Transcriptional repressor NrdR.